A 126-amino-acid chain; its full sequence is MGIRGLGLDICSISRIQRILDGPRAEPFLNRVYTEAERALCGRRSDAASAYAARFAAKEALVKALGAPPGIRWKDMEVRRQGGAPYFALSGVALEVMEARGLEAFLALTHDADVAAATVVLQSKGD.

Asp9 and Glu59 together coordinate Mg(2+).

This sequence belongs to the P-Pant transferase superfamily. AcpS family. Mg(2+) is required as a cofactor.

The protein localises to the cytoplasm. It carries out the reaction apo-[ACP] + CoA = holo-[ACP] + adenosine 3',5'-bisphosphate + H(+). Functionally, transfers the 4'-phosphopantetheine moiety from coenzyme A to a Ser of acyl-carrier-protein. The chain is Holo-[acyl-carrier-protein] synthase from Myxococcus xanthus (strain DK1622).